The following is a 330-amino-acid chain: Alpha/beta hydrolase domain-containing protein VTE7 (330 aa).

The AB hydrolase-1 domain maps to 84–315 (VVLLHCFDSS…GHLPHVENPK (232 aa)). Catalysis depends on Ser157, which acts as the Nucleophile. Active-site charge relay system residues include Asp279 and His307.

This sequence belongs to the AB hydrolase superfamily.

It localises to the plastid. The protein resides in the chloroplast envelope. In terms of biological role, hydrolase involved in tocopherol (vitamin E) biosynthesis. Releases prenyl alcohols from chlorophyll biosynthetic intermediates, which are then converted to the corresponding diphosphates for tocopherol biosynthesis. Provides most of the phytol from chlorophyll for tocopherol biosynthesis in seeds. This is Alpha/beta hydrolase domain-containing protein VTE7 from Arabidopsis thaliana (Mouse-ear cress).